The primary structure comprises 340 residues: Ketol-acid reductoisomerase (NADP(+)) (340 aa).

Residues 1–182 (MTVTMQYEKD…GSARVGLLET (182 aa)) enclose the KARI N-terminal Rossmann domain. Residues 26–29 (YGSQ), Arg49, Ser53, and 83–86 (DEIQ) contribute to the NADP(+) site. Residue His108 is part of the active site. Residue Gly134 coordinates NADP(+). Residues 183-328 (TFKEETEEDL…AELRKAMPFV (146 aa)) form the KARI C-terminal knotted domain. Asp191, Glu195, Glu227, and Glu231 together coordinate Mg(2+). Ser252 is a binding site for substrate.

The protein belongs to the ketol-acid reductoisomerase family. It depends on Mg(2+) as a cofactor.

It carries out the reaction (2R)-2,3-dihydroxy-3-methylbutanoate + NADP(+) = (2S)-2-acetolactate + NADPH + H(+). The catalysed reaction is (2R,3R)-2,3-dihydroxy-3-methylpentanoate + NADP(+) = (S)-2-ethyl-2-hydroxy-3-oxobutanoate + NADPH + H(+). Its pathway is amino-acid biosynthesis; L-isoleucine biosynthesis; L-isoleucine from 2-oxobutanoate: step 2/4. The protein operates within amino-acid biosynthesis; L-valine biosynthesis; L-valine from pyruvate: step 2/4. Its function is as follows. Involved in the biosynthesis of branched-chain amino acids (BCAA). Catalyzes an alkyl-migration followed by a ketol-acid reduction of (S)-2-acetolactate (S2AL) to yield (R)-2,3-dihydroxy-isovalerate. In the isomerase reaction, S2AL is rearranged via a Mg-dependent methyl migration to produce 3-hydroxy-3-methyl-2-ketobutyrate (HMKB). In the reductase reaction, this 2-ketoacid undergoes a metal-dependent reduction by NADPH to yield (R)-2,3-dihydroxy-isovalerate. The protein is Ketol-acid reductoisomerase (NADP(+)) of Streptococcus suis (strain 98HAH33).